Here is a 252-residue protein sequence, read N- to C-terminus: dITP/XTP pyrophosphatase (252 aa).

7 to 12 (THNEGK) provides a ligand contact to substrate. Residue aspartate 74 is the Proton acceptor of the active site. Aspartate 74 contacts Mg(2+). Substrate-binding positions include serine 75 and 193 to 196 (FGYD). Positions 202-229 (DDQPAGRVSTEPDHEGEPLTSAEMTPAE) are disordered. Residues lysine 230 and 235 to 236 (HR) each bind substrate.

It belongs to the HAM1 NTPase family. As to quaternary structure, homodimer. Mg(2+) serves as cofactor.

The enzyme catalyses XTP + H2O = XMP + diphosphate + H(+). It carries out the reaction dITP + H2O = dIMP + diphosphate + H(+). The catalysed reaction is ITP + H2O = IMP + diphosphate + H(+). In terms of biological role, pyrophosphatase that catalyzes the hydrolysis of nucleoside triphosphates to their monophosphate derivatives, with a high preference for the non-canonical purine nucleotides XTP (xanthosine triphosphate), dITP (deoxyinosine triphosphate) and ITP. Seems to function as a house-cleaning enzyme that removes non-canonical purine nucleotides from the nucleotide pool, thus preventing their incorporation into DNA/RNA and avoiding chromosomal lesions. This Bifidobacterium longum (strain DJO10A) protein is dITP/XTP pyrophosphatase.